The following is a 169-amino-acid chain: MGMFIQKEHKPTMAEEEHVDFEGGEAGASLTFPMQCSALRKNGHVVIKGRPCKIVDMSTSKTGKHGHAKVHIVALDIFNGRKYEDMSPSTHNMDVPVVKRDEYQLVNIDDGYLNLMTTDGTTKDDVRLPEGELGNEIEEGFEEGKDLIITVVSAMGEEIALACRDAPSA.

Hypusine is present on lysine 64.

This sequence belongs to the eIF-5A family. Lys-51 undergoes hypusination, a unique post-translational modification that consists in the addition of a butylamino group from spermidine to lysine side chain, leading to the formation of the unusual amino acid hypusine. eIF-5As are the only known proteins to undergo this modification, which is essential for their function.

It localises to the cytoplasm. It is found in the nucleus. In terms of biological role, translation factor that promotes translation elongation and termination, particularly upon ribosome stalling at specific amino acid sequence contexts. Binds between the exit (E) and peptidyl (P) site of the ribosome and promotes rescue of stalled ribosome: specifically required for efficient translation of polyproline-containing peptides as well as other motifs that stall the ribosome. Acts as a ribosome quality control (RQC) cofactor by joining the RQC complex to facilitate peptidyl transfer during CAT tailing step. This Schizosaccharomyces pombe (strain 972 / ATCC 24843) (Fission yeast) protein is Eukaryotic translation initiation factor 5A-2 (tif51b).